The following is a 325-amino-acid chain: MAWSLGSWLGGCLLVSALGMVPPPENVRMNSVNFKNILQWESPAFAKGNLTFTAQYLSYRIFQDKCMNTTLTECDFSSLSKYGDHTLRVRAEFADEHSDWVNITFCPVDDTIIGPPGMQVEVLADSLHMRFLAPKIENEYETWTMKNVYNSWTYNVQYWKNGTDEKFQITPQYDFEVLRNLEPWTTYCVQVRGFLPDRNKAGEWSEPVCEQTTHDETVPSWMVAVILMASVFMVCLALLGCFALLWCVYKKTKYAFSPRNSLPQHLKEFLGHPHHNTLLFFSFPLSDENDVFDKLSVIAEDSESGKQNPGDSCSLGTPPGQGPQS.

A signal peptide spans 1 to 19 (MAWSLGSWLGGCLLVSALG). Over 20-220 (MVPPPENVRM…QTTHDETVPS (201 aa)) the chain is Extracellular. 2 Fibronectin type-III domains span residues 23-111 (PPEN…VDDT) and 114-216 (GPPG…THDE). 4 N-linked (GlcNAc...) asparagine glycosylation sites follow: N49, N68, N102, and N161. C66 and C74 are disulfide-bonded. An intrachain disulfide couples C188 to C209. The helical transmembrane segment at 221–242 (WMVAVILMASVFMVCLALLGCF) threads the bilayer. At 243-325 (ALLWCVYKKT…GTPPGQGPQS (83 aa)) the chain is on the cytoplasmic side. The disordered stretch occupies residues 301 to 325 (DSESGKQNPGDSCSLGTPPGQGPQS). A compositionally biased stretch (polar residues) spans 305 to 315 (GKQNPGDSCSL).

The protein belongs to the type II cytokine receptor family. Heterodimer with IFNLR1.

The protein localises to the membrane. Functionally, shared cell surface receptor required for the activation of five class 2 cytokines: IL10, IL22, IL26, IL28, and IFNL1. The IFNLR1/IL10RB dimer is a receptor for the cytokine ligands IFNL2 and IFNL3 and mediates their antiviral activity. The ligand/receptor complex stimulate the activation of the JAK/STAT signaling pathway leading to the expression of IFN-stimulated genes (ISG), which contribute to the antiviral state. The sequence is that of Interleukin-10 receptor subunit beta (IL10RB) from Homo sapiens (Human).